The sequence spans 62 residues: Large ribosomal subunit protein bL28 (62 aa).

The protein belongs to the bacterial ribosomal protein bL28 family.

The polypeptide is Large ribosomal subunit protein bL28 (Desulforamulus reducens (strain ATCC BAA-1160 / DSM 100696 / MI-1) (Desulfotomaculum reducens)).